Consider the following 67-residue polypeptide: Large ribosomal subunit protein uL29 (67 aa).

Belongs to the universal ribosomal protein uL29 family.

This is Large ribosomal subunit protein uL29 from Alkaliphilus oremlandii (strain OhILAs) (Clostridium oremlandii (strain OhILAs)).